The following is a 241-amino-acid chain: Orotidine 5'-phosphate decarboxylase (241 aa).

Substrate-binding positions include aspartate 16, lysine 37, 64–73 (DLKFHDIPTT), threonine 128, arginine 190, glutamine 199, glycine 219, and arginine 220. Lysine 66 functions as the Proton donor in the catalytic mechanism.

It belongs to the OMP decarboxylase family. Type 1 subfamily. As to quaternary structure, homodimer.

The catalysed reaction is orotidine 5'-phosphate + H(+) = UMP + CO2. Its pathway is pyrimidine metabolism; UMP biosynthesis via de novo pathway; UMP from orotate: step 2/2. In terms of biological role, catalyzes the decarboxylation of orotidine 5'-monophosphate (OMP) to uridine 5'-monophosphate (UMP). This Prochlorococcus marinus (strain NATL2A) protein is Orotidine 5'-phosphate decarboxylase.